We begin with the raw amino-acid sequence, 1533 residues long: Glycogen debranching enzyme (1533 aa).

Phosphoserine is present on serine 64. Active-site residues include aspartate 527, histidine 530, and aspartate 628.

The protein belongs to the glycogen debranching enzyme family. Monomer. Interacts with NHLRC1/malin. Ubiquitinated.

The protein resides in the cytoplasm. It carries out the reaction Transfers a segment of a (1-&gt;4)-alpha-D-glucan to a new position in an acceptor, which may be glucose or a (1-&gt;4)-alpha-D-glucan.. The enzyme catalyses Hydrolysis of (1-&gt;6)-alpha-D-glucosidic branch linkages in glycogen phosphorylase limit dextrin.. Multifunctional enzyme acting as 1,4-alpha-D-glucan:1,4-alpha-D-glucan 4-alpha-D-glycosyltransferase and amylo-1,6-glucosidase in glycogen degradation. In Canis lupus familiaris (Dog), this protein is Glycogen debranching enzyme (AGL).